We begin with the raw amino-acid sequence, 1596 residues long: A-kinase anchor protein SPHKAP (1596 aa).

Disordered stretches follow at residues 214–233 (KHGRLAGQRAAEDDTNRSVS), 242–319 (ASEQ…TPKQ), 389–432 (DNSE…GHPA), 462–481 (SGEEYECEDEEEESETDQGE), and 760–809 (EQSD…SSSS). The segment covering 292 to 306 (TLCTSSNSQKLSRTY) has biased composition (polar residues). The segment covering 462-479 (SGEEYECEDEEEESETDQ) has biased composition (acidic residues). A PKA-RII subunit binding domain region spans residues 829-846 (FAEDLATTVVSMATELAA). 3 disordered regions span residues 958 to 1022 (VVDT…ISKQ), 1282 to 1310 (VGERRHGFKHSRCNNSGNRPGVEHQENSC), and 1328 to 1443 (VPLI…SSLG). The segment covering 959-971 (VDTSKSGQSSRSR) has biased composition (polar residues). The segment covering 1333-1356 (IEPDQREEASEEKGGVETHHREAS) has biased composition (basic and acidic residues). Residues 1357–1372 (HQTQQQSGKGSETATK) show a composition bias toward polar residues. Composition is skewed to low complexity over residues 1398 to 1409 (LSASSEESGSGS) and 1430 to 1443 (LSEGNGNSSTSSLG).

Belongs to the AKAP110 family.

The protein localises to the cytoplasm. Its function is as follows. Anchoring protein that mediates the subcellular compartmentation of cAMP-dependent protein kinase (PKA type II). The polypeptide is A-kinase anchor protein SPHKAP (sphkap) (Danio rerio (Zebrafish)).